The chain runs to 243 residues: Ubiquinone biosynthesis O-methyltransferase (243 aa).

Positions 44, 64, 85, and 129 each coordinate S-adenosyl-L-methionine.

Belongs to the methyltransferase superfamily. UbiG/COQ3 family.

It carries out the reaction a 3-demethylubiquinol + S-adenosyl-L-methionine = a ubiquinol + S-adenosyl-L-homocysteine + H(+). The catalysed reaction is a 3-(all-trans-polyprenyl)benzene-1,2-diol + S-adenosyl-L-methionine = a 2-methoxy-6-(all-trans-polyprenyl)phenol + S-adenosyl-L-homocysteine + H(+). Its pathway is cofactor biosynthesis; ubiquinone biosynthesis. O-methyltransferase that catalyzes the 2 O-methylation steps in the ubiquinone biosynthetic pathway. In Cronobacter sakazakii (strain ATCC BAA-894) (Enterobacter sakazakii), this protein is Ubiquinone biosynthesis O-methyltransferase.